Consider the following 778-residue polypeptide: Protein translocase subunit SecA 2 (778 aa).

Residues Q94, 112–116, and D501 contribute to the ATP site; that span reads GEGKT.

It belongs to the SecA family. Monomer and homodimer. Part of the essential Sec protein translocation apparatus which comprises SecA, SecYEG and auxiliary proteins SecDF. Other proteins may also be involved.

The protein localises to the cell membrane. Its subcellular location is the cytoplasm. It catalyses the reaction ATP + H2O + cellular proteinSide 1 = ADP + phosphate + cellular proteinSide 2.. Functionally, part of the Sec protein translocase complex. Interacts with the SecYEG preprotein conducting channel. Has a central role in coupling the hydrolysis of ATP to the transfer of proteins into and across the cell membrane, serving as an ATP-driven molecular motor driving the stepwise translocation of polypeptide chains across the membrane. In Mycobacterium leprae (strain TN), this protein is Protein translocase subunit SecA 2.